A 238-amino-acid polypeptide reads, in one-letter code: Ubiquinone biosynthesis O-methyltransferase (238 aa).

4 residues coordinate S-adenosyl-L-methionine: R39, G58, D79, and M123.

The protein belongs to the methyltransferase superfamily. UbiG/COQ3 family.

It catalyses the reaction a 3-demethylubiquinol + S-adenosyl-L-methionine = a ubiquinol + S-adenosyl-L-homocysteine + H(+). The catalysed reaction is a 3-(all-trans-polyprenyl)benzene-1,2-diol + S-adenosyl-L-methionine = a 2-methoxy-6-(all-trans-polyprenyl)phenol + S-adenosyl-L-homocysteine + H(+). It functions in the pathway cofactor biosynthesis; ubiquinone biosynthesis. O-methyltransferase that catalyzes the 2 O-methylation steps in the ubiquinone biosynthetic pathway. This chain is Ubiquinone biosynthesis O-methyltransferase, found in Hahella chejuensis (strain KCTC 2396).